We begin with the raw amino-acid sequence, 560 residues long: Membrane protein insertase YidC (560 aa).

6 helical membrane passes run 5–25 (IINL…WQYF), 334–354 (AIDF…MNFF), 357–377 (YVGN…LLMF), 431–451 (LPIL…YVTI), 476–496 (LFGL…WPIL), and 522–542 (FMPL…LIYW).

This sequence belongs to the OXA1/ALB3/YidC family. Type 1 subfamily. As to quaternary structure, interacts with the Sec translocase complex via SecD. Specifically interacts with transmembrane segments of nascent integral membrane proteins during membrane integration.

The protein resides in the cell inner membrane. In terms of biological role, required for the insertion and/or proper folding and/or complex formation of integral membrane proteins into the membrane. Involved in integration of membrane proteins that insert both dependently and independently of the Sec translocase complex, as well as at least some lipoproteins. Aids folding of multispanning membrane proteins. The polypeptide is Membrane protein insertase YidC (Rickettsia akari (strain Hartford)).